Reading from the N-terminus, the 450-residue chain is Tol-Pal system protein TolB (450 aa).

A signal peptide spans 1–47 (MRKLWAPNWLSAKRHHANQAATRLIGRHALMAWLAAALALSAGAAQA).

The protein belongs to the TolB family. As to quaternary structure, the Tol-Pal system is composed of five core proteins: the inner membrane proteins TolA, TolQ and TolR, the periplasmic protein TolB and the outer membrane protein Pal. They form a network linking the inner and outer membranes and the peptidoglycan layer.

Its subcellular location is the periplasm. Its function is as follows. Part of the Tol-Pal system, which plays a role in outer membrane invagination during cell division and is important for maintaining outer membrane integrity. This is Tol-Pal system protein TolB from Cupriavidus pinatubonensis (strain JMP 134 / LMG 1197) (Cupriavidus necator (strain JMP 134)).